Here is a 255-residue protein sequence, read N- to C-terminus: Enolase-phosphatase E1 (255 aa).

Asp-22 and Glu-24 together coordinate Mg(2+). Substrate-binding positions include 136–137 (SS) and Lys-173. Asp-199 contributes to the Mg(2+) binding site.

Belongs to the HAD-like hydrolase superfamily. MasA/MtnC family. In terms of assembly, monomer. Mg(2+) serves as cofactor.

It is found in the cytoplasm. It localises to the nucleus. The enzyme catalyses 5-methylsulfanyl-2,3-dioxopentyl phosphate + H2O = 1,2-dihydroxy-5-(methylsulfanyl)pent-1-en-3-one + phosphate. It functions in the pathway amino-acid biosynthesis; L-methionine biosynthesis via salvage pathway; L-methionine from S-methyl-5-thio-alpha-D-ribose 1-phosphate: step 3/6. It participates in amino-acid biosynthesis; L-methionine biosynthesis via salvage pathway; L-methionine from S-methyl-5-thio-alpha-D-ribose 1-phosphate: step 4/6. Bifunctional enzyme that catalyzes the enolization of 2,3-diketo-5-methylthiopentyl-1-phosphate (DK-MTP-1-P) into the intermediate 2-hydroxy-3-keto-5-methylthiopentenyl-1-phosphate (HK-MTPenyl-1-P), which is then dephosphorylated to form the acireductone 1,2-dihydroxy-3-keto-5-methylthiopentene (DHK-MTPene). The sequence is that of Enolase-phosphatase E1 from Verticillium alfalfae (strain VaMs.102 / ATCC MYA-4576 / FGSC 10136) (Verticillium wilt of alfalfa).